The sequence spans 465 residues: A-type ATP synthase subunit B (465 aa).

The protein belongs to the ATPase alpha/beta chains family. Has multiple subunits with at least A(3), B(3), C, D, E, F, H, I and proteolipid K(x).

Its subcellular location is the cell membrane. Its function is as follows. Component of the A-type ATP synthase that produces ATP from ADP in the presence of a proton gradient across the membrane. The B chain is a regulatory subunit. This chain is A-type ATP synthase subunit B, found in Thermococcus onnurineus (strain NA1).